The chain runs to 330 residues: uncharacterized protein (330 aa).

10 consecutive transmembrane segments (helical) span residues 27–47 (MGAY…VVVG), 56–76 (VFLS…MLLF), 90–110 (VFVL…CLLY), 119–139 (ESGI…FFLL), 147–167 (TLIG…FGAG), 176–196 (LFGN…TLMA), 206–226 (LAIS…FALF), 243–263 (YVLY…YSGV), 270–290 (VSGI…GVIL), and 294–314 (FEFV…VTVI). EamA domains lie at 38-163 (AIVG…AINL) and 187-314 (IGEA…VTVI).

It belongs to the EamA transporter family.

The protein resides in the cell membrane. This is an uncharacterized protein from Bacillus subtilis (strain 168).